An 874-amino-acid polypeptide reads, in one-letter code: Probable inorganic carbon transporter subunit DabA (874 aa).

Zn(2+) contacts are provided by C398, D400, H580, and C595.

It belongs to the inorganic carbon transporter (TC 9.A.2) DabA family. Forms a complex with DabB. It depends on Zn(2+) as a cofactor.

Its subcellular location is the cell membrane. Part of an energy-coupled inorganic carbon pump. The polypeptide is Probable inorganic carbon transporter subunit DabA (Bacillus cereus (strain 03BB102)).